A 57-amino-acid chain; its full sequence is Large ribosomal subunit protein bL33 (57 aa).

It belongs to the bacterial ribosomal protein bL33 family.

This chain is Large ribosomal subunit protein bL33, found in Shewanella denitrificans (strain OS217 / ATCC BAA-1090 / DSM 15013).